The following is a 273-amino-acid chain: Shikimate dehydrogenase (NADP(+)) (273 aa).

Shikimate-binding positions include 15–17 (SKS) and threonine 62. The active-site Proton acceptor is lysine 66. Glutamate 78 contacts NADP(+). Asparagine 87 and aspartate 103 together coordinate shikimate. NADP(+) is bound by residues 127 to 131 (GAGGA), 151 to 156 (NRTHDK), and methionine 214. Tyrosine 216 is a binding site for shikimate. NADP(+) is bound at residue glycine 238.

It belongs to the shikimate dehydrogenase family. As to quaternary structure, homodimer.

It carries out the reaction shikimate + NADP(+) = 3-dehydroshikimate + NADPH + H(+). Its pathway is metabolic intermediate biosynthesis; chorismate biosynthesis; chorismate from D-erythrose 4-phosphate and phosphoenolpyruvate: step 4/7. Involved in the biosynthesis of the chorismate, which leads to the biosynthesis of aromatic amino acids. Catalyzes the reversible NADPH linked reduction of 3-dehydroshikimate (DHSA) to yield shikimate (SA). This Shewanella denitrificans (strain OS217 / ATCC BAA-1090 / DSM 15013) protein is Shikimate dehydrogenase (NADP(+)).